We begin with the raw amino-acid sequence, 1117 residues long: Cytospin-A (1117 aa).

3 disordered regions span residues 1–176 (MKKA…NQIS), 293–323 (SLSPEITPGNQSDGGGTLTSSVEGSAPGSVE), and 358–390 (SSDDALDAPSSSESEGIPSIERSRKGSSGNASE). A compositionally biased stretch (low complexity) spans 45 to 90 (TAASLSKTKSSDDLLAGMAGGVTVTNGVKGKKSTCPSAAPSASAPA). The segment covering 93–117 (TVENKSKISTGTASSTKRNTSTGNK) has biased composition (polar residues). 2 stretches are compositionally biased toward basic and acidic residues: residues 120-131 (SSTRERLRERTR) and 158-171 (TATECDVRMSKSKS). The stretch at 168-280 (KSKSDNQISD…LNALGFSLEQ (113 aa)) forms a coiled coil. The span at 293–303 (SLSPEITPGNQ) shows a compositional bias: polar residues. Residues 358–377 (SSDDALDAPSSSESEGIPSI) show a composition bias toward low complexity. 3 positions are modified to phosphoserine: Ser384, Ser385, and Ser389. Coiled-coil stretches lie at residues 394 to 449 (ACLT…MESL) and 487 to 807 (RYME…RGRV). Residues Ser868, Ser881, and Ser887 each carry the phosphoserine modification. Residues 919–1001 (RTSSASRPAS…SRIREERKDP (83 aa)) form a disordered region. Positions 946–956 (RSSEEMKRDIS) are enriched in basic and acidic residues. Over residues 971–990 (TTSPQLSLSSSPTASVTPTT) the composition is skewed to low complexity. The Calponin-homology (CH) domain maps to 1011–1116 (GSKRNALLKW…YVTAIYKYFE (106 aa)).

This sequence belongs to the cytospin-A family. In terms of assembly, may interact with both microtubules and actin cytoskeleton.

It is found in the cytoplasm. Its subcellular location is the cytoskeleton. The protein localises to the spindle. It localises to the cell junction. The protein resides in the gap junction. In terms of biological role, involved in cytokinesis and spindle organization. May play a role in actin cytoskeleton organization and microtubule stabilization and hence required for proper cell adhesion and migration. This Pan troglodytes (Chimpanzee) protein is Cytospin-A (SPECC1L).